The primary structure comprises 566 residues: Endoglucanase G (566 aa).

A signal peptide spans 1-30 (MKKAKAIFSLVVALMVLAIFCFAQNTGSTA). The active-site Proton donor is the Glu226. Glu381 acts as the Nucleophile in catalysis. The interval 473–494 (GTPQASDPPATPTATPTKPAAS) is disordered. Residues 474-494 (TPQASDPPATPTATPTKPAAS) show a composition bias toward low complexity. A Dockerin domain is found at 497 to 564 (PSFIYGDINS…LLRSIDKLPH (68 aa)).

The protein belongs to the glycosyl hydrolase 5 (cellulase A) family.

It catalyses the reaction Endohydrolysis of (1-&gt;4)-beta-D-glucosidic linkages in cellulose, lichenin and cereal beta-D-glucans.. Its function is as follows. This enzyme catalyzes the endohydrolysis of 1,4-beta-glucosidic linkages in cellulose, lichenin and cereal beta-D-glucans. The sequence is that of Endoglucanase G (celG) from Acetivibrio thermocellus (strain ATCC 27405 / DSM 1237 / JCM 9322 / NBRC 103400 / NCIMB 10682 / NRRL B-4536 / VPI 7372) (Clostridium thermocellum).